A 644-amino-acid polypeptide reads, in one-letter code: DNA mismatch repair protein MutL (644 aa).

The interval 336–356 is disordered; that stretch reads KRNINPLNRDDKTKDKSEYQK. Basic and acidic residues predominate over residues 343 to 356; the sequence is NRDDKTKDKSEYQK.

Belongs to the DNA mismatch repair MutL/HexB family.

In terms of biological role, this protein is involved in the repair of mismatches in DNA. It is required for dam-dependent methyl-directed DNA mismatch repair. May act as a 'molecular matchmaker', a protein that promotes the formation of a stable complex between two or more DNA-binding proteins in an ATP-dependent manner without itself being part of a final effector complex. The sequence is that of DNA mismatch repair protein MutL from Halothermothrix orenii (strain H 168 / OCM 544 / DSM 9562).